A 274-amino-acid polypeptide reads, in one-letter code: Large ribosomal subunit protein uL2cz/uL2cy (274 aa).

2 disordered regions span residues 1–22 (MAIHLYKTSTPSTRNGAVDSQV) and 225–274 (PVDH…RRSK).

Belongs to the universal ribosomal protein uL2 family. In terms of assembly, part of the 50S ribosomal subunit.

It localises to the plastid. The protein resides in the chloroplast. The chain is Large ribosomal subunit protein uL2cz/uL2cy (rpl2-A) from Arabis hirsuta (Hairy rock-cress).